We begin with the raw amino-acid sequence, 220 residues long: Glutathione peroxidase (220 aa).

Sec64 is an active-site residue. A non-standard amino acid (selenocysteine) is located at residue Sec64.

The protein belongs to the glutathione peroxidase family. Post-translationally, during periods of oxidative stress, Sec-64 may react with a superoxide radical, irreversibly lose hydroselenide and be converted to dehydroalanine.

The enzyme catalyses 2 glutathione + H2O2 = glutathione disulfide + 2 H2O. Its function is as follows. May protect the virus and component of infected cells from oxidative damage by peroxides whose formation may be stimulated by infection. This is Glutathione peroxidase (GPX1) from Homo sapiens (Human).